Here is a 311-residue protein sequence, read N- to C-terminus: Urease accessory protein UreD 3 (311 aa).

The protein belongs to the UreD family. As to quaternary structure, ureD, UreF and UreG form a complex that acts as a GTP-hydrolysis-dependent molecular chaperone, activating the urease apoprotein by helping to assemble the nickel containing metallocenter of UreC. The UreE protein probably delivers the nickel.

Its subcellular location is the cytoplasm. In terms of biological role, required for maturation of urease via the functional incorporation of the urease nickel metallocenter. The sequence is that of Urease accessory protein UreD 3 from Methylorubrum populi (strain ATCC BAA-705 / NCIMB 13946 / BJ001) (Methylobacterium populi).